The chain runs to 152 residues: MFRGTSAITLDSKNRITIPTKYREELFADCQGKMVCTVDIQHPCLLLYPLPEWEEIELKLCNLSSMNPQERLLQQVILGNASDCEMDKNGRLLINGPLRQHASLEKNVMLVGQLKKFEIWHDTAWQSQMLQGISKIQSGEIELTERLLDLSL.

SpoVT-AbrB domains are found at residues 5-52 (TSAI…PLPE) and 81-124 (ASDC…HDTA).

It belongs to the MraZ family. In terms of assembly, forms oligomers.

It localises to the cytoplasm. Its subcellular location is the nucleoid. This chain is Transcriptional regulator MraZ, found in Colwellia psychrerythraea (strain 34H / ATCC BAA-681) (Vibrio psychroerythus).